Consider the following 435-residue polypeptide: Serine--tRNA ligase (435 aa).

233 to 235 lines the L-serine pocket; the sequence is TAE. Position 264 to 266 (264 to 266) interacts with ATP; it reads RAE. Residue Glu-287 coordinates L-serine. 351 to 354 serves as a coordination point for ATP; sequence EISS. An L-serine-binding site is contributed by Ser-386.

It belongs to the class-II aminoacyl-tRNA synthetase family. Type-1 seryl-tRNA synthetase subfamily. In terms of assembly, homodimer. The tRNA molecule binds across the dimer.

Its subcellular location is the cytoplasm. The catalysed reaction is tRNA(Ser) + L-serine + ATP = L-seryl-tRNA(Ser) + AMP + diphosphate + H(+). The enzyme catalyses tRNA(Sec) + L-serine + ATP = L-seryl-tRNA(Sec) + AMP + diphosphate + H(+). Its pathway is aminoacyl-tRNA biosynthesis; selenocysteinyl-tRNA(Sec) biosynthesis; L-seryl-tRNA(Sec) from L-serine and tRNA(Sec): step 1/1. Catalyzes the attachment of serine to tRNA(Ser). Is also able to aminoacylate tRNA(Sec) with serine, to form the misacylated tRNA L-seryl-tRNA(Sec), which will be further converted into selenocysteinyl-tRNA(Sec). The polypeptide is Serine--tRNA ligase (Anaeromyxobacter dehalogenans (strain 2CP-C)).